The sequence spans 449 residues: Na(+)-translocating NADH-quinone reductase subunit A (449 aa).

Belongs to the NqrA family. Composed of six subunits; NqrA, NqrB, NqrC, NqrD, NqrE and NqrF.

The enzyme catalyses a ubiquinone + n Na(+)(in) + NADH + H(+) = a ubiquinol + n Na(+)(out) + NAD(+). Its function is as follows. NQR complex catalyzes the reduction of ubiquinone-1 to ubiquinol by two successive reactions, coupled with the transport of Na(+) ions from the cytoplasm to the periplasm. NqrA to NqrE are probably involved in the second step, the conversion of ubisemiquinone to ubiquinol. This Actinobacillus pleuropneumoniae serotype 5b (strain L20) protein is Na(+)-translocating NADH-quinone reductase subunit A.